The chain runs to 658 residues: Carnitine O-palmitoyltransferase 2, mitochondrial (658 aa).

The N-terminal 25 residues, 1–25 (MVPRLLLRAWPRGPAVGPGAPSRPL), are a transit peptide targeting the mitochondrion. Residues 26-178 (SAGSGPGQYL…GLLEPEVFHL (153 aa)) lie on the Mitochondrial matrix side of the membrane. At Lys69 the chain carries N6-succinyllysine. Lys79 is modified (N6-acetyllysine). The residue at position 85 (Lys85) is an N6-succinyllysine. Residues 179–208 (NPAKSDTITFKRLIRFVPSSLSWYGAYLVN) constitute an intramembrane region (note=Mitochondrial inner membrane). The Mitochondrial matrix portion of the chain corresponds to 209–658 (AYPLDMSQYF…DALEGKSIKS (450 aa)). Residue Lys239 is modified to N6-acetyllysine; alternate. The residue at position 239 (Lys239) is an N6-succinyllysine; alternate. Lys305 is subject to N6-acetyllysine. His372 (proton acceptor) is an active-site residue. Residues Lys424 and Lys439 each carry the N6-succinyllysine modification. 452-464 (GKEFLKKQKLSPD) is a CoA binding site. (R)-carnitine-binding residues include Tyr486, Ser488, and Thr499. An N6-acetyllysine; alternate mark is found at Lys510 and Lys544. Residues Lys510 and Lys544 each carry the N6-succinyllysine; alternate modification.

It belongs to the carnitine/choline acetyltransferase family.

The protein localises to the mitochondrion inner membrane. The catalysed reaction is (R)-carnitine + hexadecanoyl-CoA = O-hexadecanoyl-(R)-carnitine + CoA. The enzyme catalyses octanoyl-CoA + (R)-carnitine = O-octanoyl-(R)-carnitine + CoA. It carries out the reaction decanoyl-CoA + (R)-carnitine = O-decanoyl-(R)-carnitine + CoA. It catalyses the reaction dodecanoyl-CoA + (R)-carnitine = O-dodecanoyl-R-carnitine + CoA. The catalysed reaction is tetradecanoyl-CoA + (R)-carnitine = O-tetradecanoyl-(R)-carnitine + CoA. The enzyme catalyses (R)-carnitine + octadecanoyl-CoA = O-octadecanoyl-(R)-carnitine + CoA. It carries out the reaction eicosanoyl-CoA + (R)-carnitine = O-eicosanoyl-(R)-carnitine + CoA. It catalyses the reaction (9Z)-tetradecenoyl-CoA + (R)-carnitine = O-(9Z)-tetradecenoyl-(R)-carnitine + CoA. The catalysed reaction is (5Z)-tetradecenoyl-CoA + (R)-carnitine = O-(5Z)-tetradecenoyl-(R)-carnitine + CoA. The enzyme catalyses (R)-carnitine + (9Z)-octadecenoyl-CoA = O-(9Z)-octadecenoyl-(R)-carnitine + CoA. It carries out the reaction 4,8-dimethylnonanoyl-CoA + (R)-carnitine = O-4,8-dimethylnonanoyl-(R)-carnitine + CoA. The protein operates within lipid metabolism; fatty acid beta-oxidation. Inhibited by trans-2-hexadecanoyl-CoA. Involved in the intramitochondrial synthesis of acylcarnitines from accumulated acyl-CoA metabolites. Reconverts acylcarnitines back into the respective acyl-CoA esters that can then undergo beta-oxidation, an essential step for the mitochondrial uptake of long-chain fatty acids and their subsequent beta-oxidation in the mitochondrion. Active with medium (C8-C12) and long-chain (C14-C18) acyl-CoA esters. This is Carnitine O-palmitoyltransferase 2, mitochondrial from Homo sapiens (Human).